The sequence spans 136 residues: Pilotin AspS 2 (136 aa).

Positions 1 to 24 are cleaved as a signal peptide; that stretch reads MSIKQMPGRVLISLLLSVTGLLSG. A lipid anchor (N-palmitoyl cysteine) is attached at C25. C25 carries S-diacylglycerol cysteine lipidation. A disulfide bridge connects residues C94 and C131.

This sequence belongs to the GspS/AspS pilotin family. As to quaternary structure, cryo-electron microscopy shows that the complex forms a cylindrical channel with 15 GspD2 subunits, each of which interacts with its surrounding AspS2 (GspS-beta).

Its subcellular location is the cell outer membrane. Its function is as follows. Part of a type II secretion system (T2SS, formerly general secretion pathway, GSP) for the export of folded proteins across the outer membrane. Required for correct assembly of the type II secretion system-beta (T2SS-beta), for localization of GspD-beta to the cell outer membrane and for export of a labile enterotoxin by T2SS-beta. Each AspS2 binds to 2 GspD2 subunits and may clamp the monomers together, stabilizing structure and accelerating its assembly. The polypeptide is Pilotin AspS 2 (Escherichia coli O78:H11 (strain H10407 / ETEC)).